A 398-amino-acid polypeptide reads, in one-letter code: Vacuolar protease A (398 aa).

A signal peptide spans 1-18 (MKSTSLLTASVLLGSASA). Residues 19–70 (AVHKLKLNKVPLDEQLYTHNIDAHVRALGQKYMGIRPNVHQELLEENSLNDM) constitute a propeptide, activation peptide. The Peptidase A1 domain maps to 85–395 (YFSEISLGTP…DLGNNAVGLA (311 aa)). Asp-103 is a catalytic residue. Cys-116 and Cys-121 are disulfide-bonded. Asn-138 is a glycosylation site (N-linked (GlcNAc...) asparagine). Asp-287 is an active-site residue. Cys-321 and Cys-354 are oxidised to a cystine. Asn-338 is a glycosylation site (N-linked (GlcNAc...) asparagine).

The protein belongs to the peptidase A1 family.

Its subcellular location is the vacuole lumen. It localises to the secreted. The enzyme catalyses Hydrolysis of proteins with broad specificity for peptide bonds. Cleaves -Leu-Leu-|-Val-Tyr- bond in a synthetic substrate. Does not act on esters of Tyr or Arg.. In terms of biological role, vacuolar aspartic endopeptidase which is probably also secreted and contributes to virulence. The sequence is that of Vacuolar protease A (pep2) from Aspergillus fumigatus (strain ATCC MYA-4609 / CBS 101355 / FGSC A1100 / Af293) (Neosartorya fumigata).